The sequence spans 313 residues: 4-hydroxy-3-methylbut-2-enyl diphosphate reductase (313 aa).

C20 lines the [4Fe-4S] cluster pocket. 2 residues coordinate (2E)-4-hydroxy-3-methylbut-2-enyl diphosphate: H49 and H82. The dimethylallyl diphosphate site is built by H49 and H82. Isopentenyl diphosphate-binding residues include H49 and H82. C104 is a binding site for [4Fe-4S] cluster. H132 is a (2E)-4-hydroxy-3-methylbut-2-enyl diphosphate binding site. H132 provides a ligand contact to dimethylallyl diphosphate. H132 is an isopentenyl diphosphate binding site. Catalysis depends on E134, which acts as the Proton donor. T172 contacts (2E)-4-hydroxy-3-methylbut-2-enyl diphosphate. C201 serves as a coordination point for [4Fe-4S] cluster. 4 residues coordinate (2E)-4-hydroxy-3-methylbut-2-enyl diphosphate: S229, S230, N231, and S273. 4 residues coordinate dimethylallyl diphosphate: S229, S230, N231, and S273. Isopentenyl diphosphate contacts are provided by S229, S230, N231, and S273.

It belongs to the IspH family. Requires [4Fe-4S] cluster as cofactor.

The catalysed reaction is isopentenyl diphosphate + 2 oxidized [2Fe-2S]-[ferredoxin] + H2O = (2E)-4-hydroxy-3-methylbut-2-enyl diphosphate + 2 reduced [2Fe-2S]-[ferredoxin] + 2 H(+). The enzyme catalyses dimethylallyl diphosphate + 2 oxidized [2Fe-2S]-[ferredoxin] + H2O = (2E)-4-hydroxy-3-methylbut-2-enyl diphosphate + 2 reduced [2Fe-2S]-[ferredoxin] + 2 H(+). It participates in isoprenoid biosynthesis; dimethylallyl diphosphate biosynthesis; dimethylallyl diphosphate from (2E)-4-hydroxy-3-methylbutenyl diphosphate: step 1/1. It functions in the pathway isoprenoid biosynthesis; isopentenyl diphosphate biosynthesis via DXP pathway; isopentenyl diphosphate from 1-deoxy-D-xylulose 5-phosphate: step 6/6. Catalyzes the conversion of 1-hydroxy-2-methyl-2-(E)-butenyl 4-diphosphate (HMBPP) into a mixture of isopentenyl diphosphate (IPP) and dimethylallyl diphosphate (DMAPP). Acts in the terminal step of the DOXP/MEP pathway for isoprenoid precursor biosynthesis. The protein is 4-hydroxy-3-methylbut-2-enyl diphosphate reductase of Desulfotalea psychrophila (strain LSv54 / DSM 12343).